A 221-amino-acid chain; its full sequence is MLDYVPWIGNGYRYGNNHRGSNSSTSGVTTQGQSQNASSNEPAPTFSNVGVGLKANVNGTLSGSRTTPNQQGTPWLTLDQANLQLWTGAGWRNDKNGQSDENYTNFASAKGSTNQQGSTTGGSAGNPDSLKQDKADKSGDSVTVAEATSGDNLTNYTNLPPTSPPHPTDRTRCHSPTRTTPSGCSCSCAACWAASRCWSIRVGKMITVSLIPPTKNGLTPN.

Positions 13–36 (RYGNNHRGSNSSTSGVTTQGQSQN) are enriched in low complexity. 2 disordered regions span residues 13–51 (RYGN…NVGV) and 90–183 (GWRN…TPSG). Residues 37 to 48 (ASSNEPAPTFSN) are compositionally biased toward polar residues. Basic and acidic residues predominate over residues 130–139 (LKQDKADKSG). Polar residues-rich tracts occupy residues 149–160 (SGDNLTNYTNLP) and 174–183 (HSPTRTTPSG).

Belongs to the adhesin P1 family.

The sequence is that of Putative adhesin P1-like protein MPN_131 from Mycoplasma pneumoniae (strain ATCC 29342 / M129 / Subtype 1) (Mycoplasmoides pneumoniae).